The following is a 118-amino-acid chain: Large ribosomal subunit protein bL20 (118 aa).

This sequence belongs to the bacterial ribosomal protein bL20 family.

Binds directly to 23S ribosomal RNA and is necessary for the in vitro assembly process of the 50S ribosomal subunit. It is not involved in the protein synthesizing functions of that subunit. The chain is Large ribosomal subunit protein bL20 from Hydrogenovibrio crunogenus (strain DSM 25203 / XCL-2) (Thiomicrospira crunogena).